The following is a 308-amino-acid chain: tRNA-cytidine(32) 2-sulfurtransferase (308 aa).

Residues 39–44 (SGGKDS) carry the PP-loop motif motif. Cys-114, Cys-117, and Cys-205 together coordinate [4Fe-4S] cluster.

It belongs to the TtcA family. Homodimer. The cofactor is Mg(2+). [4Fe-4S] cluster is required as a cofactor.

It localises to the cytoplasm. The catalysed reaction is cytidine(32) in tRNA + S-sulfanyl-L-cysteinyl-[cysteine desulfurase] + AH2 + ATP = 2-thiocytidine(32) in tRNA + L-cysteinyl-[cysteine desulfurase] + A + AMP + diphosphate + H(+). It participates in tRNA modification. Functionally, catalyzes the ATP-dependent 2-thiolation of cytidine in position 32 of tRNA, to form 2-thiocytidine (s(2)C32). The sulfur atoms are provided by the cysteine/cysteine desulfurase (IscS) system. In Cupriavidus taiwanensis (strain DSM 17343 / BCRC 17206 / CCUG 44338 / CIP 107171 / LMG 19424 / R1) (Ralstonia taiwanensis (strain LMG 19424)), this protein is tRNA-cytidine(32) 2-sulfurtransferase.